The sequence spans 140 residues: Small ribosomal subunit protein uS12 (140 aa).

Residue Pro59 is modified to Hydroxyproline.

This sequence belongs to the universal ribosomal protein uS12 family.

In Encephalitozoon cuniculi (strain GB-M1) (Microsporidian parasite), this protein is Small ribosomal subunit protein uS12 (RPS23).